Consider the following 35-residue polypeptide: Defensin-B (35 aa).

3 cysteine pairs are disulfide-bonded: Cys4-Cys25, Cys10-Cys33, and Cys14-Cys35.

The protein resides in the secreted. Functionally, has antibacterial activity against M.luteus and E.coli. This Mytilus edulis (Blue mussel) protein is Defensin-B.